A 631-amino-acid chain; its full sequence is uncharacterized protein (631 aa).

A run of 9 helical transmembrane segments spans residues 42–62 (VLVG…IGGF), 76–96 (ALKL…GTLL), 106–128 (VLGL…GPAP), 152–172 (AGLT…GWLW), 344–364 (ALKY…FGFA), 366–386 (SYWI…VFTL), 398–418 (IGVI…YIAF), 429–449 (MLIV…ALVI), and 464–484 (IARL…TMLL).

The protein belongs to the YccS/YhfK family.

Its subcellular location is the cell membrane. This is an uncharacterized protein from Bacillus subtilis (strain 168).